Reading from the N-terminus, the 1343-residue chain is DNA-directed RNA polymerase subunit beta (1343 aa).

Belongs to the RNA polymerase beta chain family. As to quaternary structure, the RNAP catalytic core consists of 2 alpha, 1 beta, 1 beta' and 1 omega subunit. When a sigma factor is associated with the core the holoenzyme is formed, which can initiate transcription.

The catalysed reaction is RNA(n) + a ribonucleoside 5'-triphosphate = RNA(n+1) + diphosphate. In terms of biological role, DNA-dependent RNA polymerase catalyzes the transcription of DNA into RNA using the four ribonucleoside triphosphates as substrates. The polypeptide is DNA-directed RNA polymerase subunit beta (Buchnera aphidicola subsp. Cinara cedri (strain Cc)).